Reading from the N-terminus, the 690-residue chain is Protein arginine N-methyltransferase 7 (690 aa).

SAM-dependent MTase PRMT-type domains are found at residues 14–357 and 366–690; these read QNSW…YSLW and TKSV…QKKL.

This sequence belongs to the class I-like SAM-binding methyltransferase superfamily. Protein arginine N-methyltransferase family. PRMT7 subfamily. Expressed at low level in ovary.

Essential arginine methyltransferase that can both catalyze the formation of omega-N monomethylarginine (MMA) and symmetrical dimethylarginine (sDMA). Specifically mediates the symmetrical dimethylation of arginine residues in the small nuclear ribonucleoproteins SmD1 and SmD3. In Drosophila melanogaster (Fruit fly), this protein is Protein arginine N-methyltransferase 7 (Art7).